Reading from the N-terminus, the 445-residue chain is Argininosuccinate synthase (445 aa).

ATP-binding positions include 17 to 25 and alanine 43; that span reads AFSGGLDTS. Tyrosine 99 contacts L-citrulline. 2 residues coordinate ATP: glycine 129 and threonine 131. L-aspartate is bound by residues threonine 131, asparagine 135, and aspartate 136. An L-citrulline-binding site is contributed by asparagine 135. Residue aspartate 136 participates in ATP binding. L-citrulline is bound by residues arginine 139 and serine 192. An ATP-binding site is contributed by aspartate 194. The L-citrulline site is built by threonine 201, glutamate 203, and glutamate 280.

This sequence belongs to the argininosuccinate synthase family. Type 2 subfamily. In terms of assembly, homotetramer.

It localises to the cytoplasm. The catalysed reaction is L-citrulline + L-aspartate + ATP = 2-(N(omega)-L-arginino)succinate + AMP + diphosphate + H(+). Its pathway is amino-acid biosynthesis; L-arginine biosynthesis; L-arginine from L-ornithine and carbamoyl phosphate: step 2/3. In Gemmatimonas aurantiaca (strain DSM 14586 / JCM 11422 / NBRC 100505 / T-27), this protein is Argininosuccinate synthase.